We begin with the raw amino-acid sequence, 1491 residues long: Terminal uridylyltransferase 7 (1491 aa).

Thr64 carries the post-translational modification Phosphothreonine. Phosphoserine is present on residues Ser132 and Ser172. A disordered region spans residues 165-203 (MSEMEAGSPENKKQRSRPRKPRRTRTEDSEQDGDLDGPV). The segment covering 178-187 (QRSRPRKPRR) has biased composition (basic residues). The Matrin-type zinc-finger motif lies at 244-274 (YTCKLCDALIDSIPFAHKHIKEKRHKKNLKE). The PAP-associated 1 domain occupies 551–600 (VGQLWVELLRFYALEFNLADLVISIRVKELISRESKDWPKKRIAIEDPYS). Phosphoserine is present on residues Ser600 and Ser747. 2 disordered regions span residues 740-774 (AELPETGSDNEEVRRKTKHPLSTDDQGLSSSKHPE) and 834-911 (QSRT…CGEN). The segment covering 844–857 (DDEEEEEEEEEEEE) has biased composition (acidic residues). Residue Thr865 is modified to Phosphothreonine. Positions 885 to 897 (GEEDALSEEDDLA) are enriched in acidic residues. Ser891 carries the phosphoserine modification. The sufficient for monouridylation activity stretch occupies residues 947–1491 (RKLTFTKGKS…ASVKRTQQES (545 aa)). The CCHC-type 1 zinc-finger motif lies at 959–976 (VVCSLCKREGHLKKDCPE). UTP is bound by residues 1043 to 1046 (SSKN), 1053 to 1056 (SDLD), Asn1126, Lys1148, 1166 to 1170 (SYAYT), and His1282. 2 residues coordinate Mg(2+): Asp1054 and Asp1056. The PAP-associated 2 domain occupies 1230–1282 (VGQLWLGLLRFYTEEFDFKEHVISIRRKSLLTTFKKQWTSKYIVIEDPFDLNH). The segment at 1341–1358 (RCCRICGKIGHFMKDCPM) adopts a CCHC-type 2 zinc-finger fold. 2 disordered regions span residues 1362 to 1399 (VRRRRDQEDTPNQRYSESKEKRSKEDKEIQNKYTEKEV) and 1463 to 1491 (PQFKGSPGSLSSKYMTQGRASVKRTQQES). A compositionally biased stretch (basic and acidic residues) spans 1377 to 1399 (SESKEKRSKEDKEIQNKYTEKEV). Residues 1447 to 1464 (KRCFICGREGHIKKECPQ) form a CCHC-type 3 zinc finger. Residues 1470–1481 (GSLSSKYMTQGR) are compositionally biased toward polar residues.

Belongs to the DNA polymerase type-B-like family. Mg(2+) is required as a cofactor. Mn(2+) serves as cofactor.

It is found in the cytoplasm. It carries out the reaction RNA(n) + UTP = RNA(n)-3'-uridine ribonucleotide + diphosphate. Functionally, uridylyltransferase that mediates the terminal uridylation of mRNAs with short (less than 25 nucleotides) poly(A) tails, hence facilitating global mRNA decay. Essential for both oocyte maturation and fertility. Through 3' terminal uridylation of mRNA, sculpts, with TUT7, the maternal transcriptome by eliminating transcripts during oocyte growth. Involved in microRNA (miRNA)-induced gene silencing through uridylation of deadenylated miRNA targets. Also acts as a suppressor of miRNA biogenesis by mediating the terminal uridylation of miRNA precursors, including that of let-7 (pre-let-7). Uridylated pre-let-7 RNA is not processed by Dicer and undergo degradation. Pre-let-7 uridylation is strongly enhanced in the presence of LIN28A. Due to functional redundancy between ZCCHC6 and ZCCHC11, the identification of the specific role of each of these proteins is difficult. Involved in microRNA (miRNA)-induced gene silencing through uridylation of deadenylated miRNA targets. Also functions as an integral regulator of microRNA biogenesiS using 3 different uridylation mechanisms. Acts as a suppressor of miRNA biogenesis by mediating the terminal uridylation of some miRNA precursors, including that of let-7 (pre-let-7). Uridylated pre-let-7 RNA is not processed by Dicer and undergo degradation. Pre-let-7 oligouridylation is strongly enhanced in the presence of LIN28A. In the absence of LIN28A, TUT7 and TUT4 monouridylate group II pre-miRNAs, which includes most of pre-let7 members, that shapes an optimal 3' end overhang for efficient processing. Add oligo-U tails to truncated pre-miRNAS with a 5' overhang which may promote rapid degradation of non-functional pre-miRNA species. Does not play a role in replication-dependent histone mRNA degradation. Due to functional redundancy between TUT4 and TUT7, the identification of the specific role of each of these proteins is difficult. TUT4 and TUT7 restrict retrotransposition of long interspersed element-1 (LINE-1) in cooperation with MOV10 counteracting the RNA chaperonne activity of L1RE1. TUT7 uridylates LINE-1 mRNAs in the cytoplasm which inhibits initiation of reverse transcription once in the nucleus, whereas uridylation by TUT4 destabilizes mRNAs in cytoplasmic ribonucleoprotein granules. In Mus musculus (Mouse), this protein is Terminal uridylyltransferase 7.